A 161-amino-acid chain; its full sequence is Nucleotide-binding protein Sfri_0732 (161 aa).

Belongs to the YajQ family.

In terms of biological role, nucleotide-binding protein. In Shewanella frigidimarina (strain NCIMB 400), this protein is Nucleotide-binding protein Sfri_0732.